A 770-amino-acid chain; its full sequence is Signal transducer and activator of transcription 3 (770 aa).

An N-acetylalanine modification is found at Ala2. 2 positions are modified to N6-acetyllysine: Lys49 and Lys87. The Essential for nuclear import signature appears at 150–162; that stretch reads DVRKRVQDLEQKM. Residues 580–670 form the SH2 domain; the sequence is WNEGYIMGFI…DATNILVSPL (91 aa). Residues Lys601, Lys615, and Lys631 each carry the allysine; alternate modification. An N6-acetyllysine; alternate mark is found at Lys601, Lys615, and Lys631. Tyr640 carries the phosphotyrosine; by TYK2 modification. An Allysine; alternate modification is found at Lys685. The residue at position 685 (Lys685) is an N6-acetyllysine; alternate. The residue at position 704 (Pro704) is a Phosphotyrosine. Tyr705 carries the phosphotyrosine; by FER and PTK6 modification. Lys707 bears the N6-acetyllysine mark. Thr714 is modified (phosphothreonine). Position 727 is a phosphoserine; by DYRK2, NLK, NEK6, IRAK1, RPS6KA5, ZIPK/DAPK3 and PKC/PRKCE (Ser727).

It belongs to the transcription factor STAT family. As to quaternary structure, forms a homodimer or a heterodimer with a related family member (at least STAT1). Component of a promoter-binding complex composed of STAT3, NFATC3 and NFATC4; complex formation is enhanced by calcineurin. Interacts with IL31RA, NCOA1, PELP1, SIPAR, SOCS7, STATIP1 and TMF1. Interacts with IL23R in presence of IL23. Interacts (via SH2 domain) with NLK. Interacts with ARL2BP; the interaction is enhanced by LIF and JAK1 expression. Interacts with KPNA4 and KPNA5; KPNA4 may be the primary mediator of nuclear import. Interacts with CAV2; the interaction is increased on insulin-induced tyrosine phosphorylation of CAV2 and leads to STAT3 activation. Interacts with ARL2BP; interaction is enhanced with ARL2. Interacts with NEK6. Binds to CDK9 when activated and nuclear. Interacts with BMX. Interacts with ZIPK/DAPK3. Interacts with PIAS3; the interaction occurs on stimulation by IL6, CNTF or OSM and inhibits the DNA binding activity of STAT3. In prostate cancer cells, interacts with PRKCE and promotes DNA binding activity of STAT3. Interacts with STMN3, antagonizing its microtubule-destabilizing activity. Interacts with the 'Lys-129' acetylated form of BIRC5/survivin. Interacts with FER. Interacts (via SH2 domain) with EIF2AK2/PKR (via the kinase catalytic domain). Interacts with INPP5F; the interaction is independent of STAT3 Tyr-705 phosphorylation status. Interacts with FGFR4. Interacts with OCIAD1. Interacts with OCIAD2. Interacts (unphosphorylated or phosphorylated at Ser-727) with PHB1. Interacts and may form heterodimers with NHLH1. Found in a complex with SLC39A6, SLC39A10 and with the 'Ser-727' phosphorylated form of STAT3 throughout mitosis. Interacts (when phosphorylated at Tyr-705) with CD274/PD-L1; promoting nuclear translocation of CD274/PD-L1. Interacts (when acetylated) with EP300 (via bromo domain); interaction takes place following STAT3 acetylation by EP300 and promotes enhanceosome assembly. Interacts (when acetylated) with BRD2 (via bromo domain); interaction promotes STAT3 recruitment to chromatin and T-helper Th17 cell differentiation. Interacts with FAM220A/SIPAR; the interaction occurs in both the nucleus and the cytoplasm, is enhanced by IL6 and promotes STAT3 dephosphorylation. Interacts in both unphosphorylated and phosphorylated forms with FAM220A but interacts preferentially in the phosphorylated form in the nucleus. Interacts with PTPN2; the interaction is promoted by FAM220A and leads to STAT3 dephosphorylation which negatively regulates STAT3 transcriptional activator activity. In terms of assembly, (Microbial infection) Interacts with HCV core protein. (Microbial infection) Interacts with S.typhimurium SarA. As to quaternary structure, (Microbial infection) Interacts with human cytomegalovirus (HHV-5) immediate early protein IE1; this interaction leads to STAT3 nuclear accumulation and disruption of IL6-induced STAT3 phosphorylation. Tyrosine phosphorylated upon stimulation with EGF. Tyrosine phosphorylated in response to constitutively activated FGFR1, FGFR2, FGFR3 and FGFR4. Activated through tyrosine phosphorylation by BMX. Tyrosine phosphorylated in response to IL6, IL11, LIF, CNTF, KITLG/SCF, CSF1, EGF, PDGF, IFN-alpha, LEP and OSM. Activated KIT promotes phosphorylation on tyrosine residues and subsequent translocation to the nucleus. Phosphorylated on serine upon DNA damage, probably by ATM or ATR. Serine phosphorylation is important for the formation of stable DNA-binding STAT3 homodimers and maximal transcriptional activity. ARL2BP may participate in keeping the phosphorylated state of STAT3 within the nucleus. Upon LPS challenge, phosphorylated within the nucleus by IRAK1. Upon erythropoietin treatment, phosphorylated on Ser-727 by RPS6KA5. Dephosphorylation on tyrosine residues by PTPN2 negatively regulates IL6/interleukin-6 signaling. Phosphorylation at Tyr-705 by PTK6, isoform M2 of PKM (PKM2) or FER leads to an increase of its transcriptional activity. Phosphorylation at Tyr-705 is increased in the presence of calcineurin. Phosphorylation at Tyr-640 by TYK2 negatively regulates transcriptional activity. In terms of processing, acetylated on lysine residues by EP300/p300, promoting its activation. Acetylation at Lys-49 and Lys-87 by EP300/p300 promotes its activation. Acetylation at Lys-87 by EP300/p300 promotes its association with BRD2 and recruitment to chromatin. Deacetylated at Lys-49 and Lys-87 by HDAC1. Acetylation at Lys-685 by EP300/p300 promotes its homodimerization and activation. Deacetylated at Lys-685 by HDAC3. Acetylated on lysine residues by CREBBP. Deacetylation by LOXL3 leads to disrupt STAT3 dimerization and inhibit STAT3 transcription activity. Oxidation of lysine residues to allysine on STAT3 preferentially takes place on lysine residues that are acetylated. Post-translationally, some lysine residues are oxidized to allysine by LOXL3, leading to disrupt STAT3 dimerization and inhibit STAT3 transcription activity. Oxidation of lysine residues to allysine on STAT3 preferentially takes place on lysine residues that are acetylated. (Microbial infection) Phosphorylated on Tyr-705 in the presence of S.typhimurium SarA. In terms of tissue distribution, heart, brain, placenta, lung, liver, skeletal muscle, kidney and pancreas. Expressed in naive CD4(+) T cells as well as T-helper Th17, Th1 and Th2 cells.

It localises to the cytoplasm. The protein resides in the nucleus. Its function is as follows. Signal transducer and transcription activator that mediates cellular responses to interleukins, KITLG/SCF, LEP and other growth factors. Once activated, recruits coactivators, such as NCOA1 or MED1, to the promoter region of the target gene. May mediate cellular responses to activated FGFR1, FGFR2, FGFR3 and FGFR4. Upon activation of IL6ST/gp130 signaling by interleukin-6 (IL6), binds to the IL6-responsive elements identified in the promoters of various acute-phase protein genes. Activated by IL31 through IL31RA. Acts as a regulator of inflammatory response by regulating differentiation of naive CD4(+) T-cells into T-helper Th17 or regulatory T-cells (Treg): acetylation promotes its transcription activity and cell differentiation while deacetylation and oxidation of lysine residues by LOXL3 inhibits differentiation. Involved in cell cycle regulation by inducing the expression of key genes for the progression from G1 to S phase, such as CCND1. Mediates the effects of LEP on melanocortin production, body energy homeostasis and lactation. May play an apoptotic role by transctivating BIRC5 expression under LEP activation. Cytoplasmic STAT3 represses macroautophagy by inhibiting EIF2AK2/PKR activity. Plays a crucial role in basal beta cell functions, such as regulation of insulin secretion. Following JAK/STAT signaling activation and as part of a complex with NFATC3 and NFATC4, binds to the alpha-beta E4 promoter region of CRYAB and activates transcription in cardiomyocytes. This is Signal transducer and activator of transcription 3 from Homo sapiens (Human).